The following is a 590-amino-acid chain: Aspartate--tRNA(Asp/Asn) ligase (590 aa).

Glutamate 170 lines the L-aspartate pocket. Positions 194-197 are aspartate; sequence QLFK. Arginine 216 is an L-aspartate binding site. Residues 216-218 and glutamine 225 each bind ATP; that span reads RDE. An L-aspartate-binding site is contributed by histidine 448. Residue glutamate 482 coordinates ATP. Arginine 489 lines the L-aspartate pocket. 534 to 537 provides a ligand contact to ATP; the sequence is GWDR. The disordered stretch occupies residues 559–590; that stretch reads GGVDPLTEAPAPITAQQRKESGIDAKPGKDGA. Over residues 575 to 590 the composition is skewed to basic and acidic residues; it reads QRKESGIDAKPGKDGA.

The protein belongs to the class-II aminoacyl-tRNA synthetase family. Type 1 subfamily. Homodimer.

Its subcellular location is the cytoplasm. The catalysed reaction is tRNA(Asx) + L-aspartate + ATP = L-aspartyl-tRNA(Asx) + AMP + diphosphate. Aspartyl-tRNA synthetase with relaxed tRNA specificity since it is able to aspartylate not only its cognate tRNA(Asp) but also tRNA(Asn). Reaction proceeds in two steps: L-aspartate is first activated by ATP to form Asp-AMP and then transferred to the acceptor end of tRNA(Asp/Asn). This is Aspartate--tRNA(Asp/Asn) ligase from Mycolicibacterium gilvum (strain PYR-GCK) (Mycobacterium gilvum (strain PYR-GCK)).